Here is a 225-residue protein sequence, read N- to C-terminus: MPNRKVVKFFFDVISPYSYFGFEGITRHRSVWKTPIQMKPFFFAGVVRHTENPGLPLRIPIKEKYMHKDLLFSAQYWGIPFRLPKDYTNMMLNTSSIVPQRILVASQLRDNVLMEDVARGLWHRFYAYGKPIFTKSQVAEVLRDLHVKDVDELVMMSDSAEVKNILRENTDEAIGNGCFGAPWMHITDGHGKVLQTVFGSDRLPQVADFLAEPFKGPMREKKPNA.

Glutathione contacts are provided by residues 15-17, Asn-52, and 200-201; these read SPY and SD.

It belongs to the GST superfamily. Kappa family. In terms of tissue distribution, expressed in the pharynx, body wall muscles and epidermis. Weaker expression is seen in the intestine.

It is found in the mitochondrion. The catalysed reaction is RX + glutathione = an S-substituted glutathione + a halide anion + H(+). Its function is as follows. Has roles in respiratory and lipid metabolism. This chain is Glutathione s-transferase kappa 2 (gstk-2), found in Caenorhabditis elegans.